A 322-amino-acid chain; its full sequence is 4-hydroxythreonine-4-phosphate dehydrogenase (322 aa).

Substrate is bound by residues histidine 131 and threonine 132. A divalent metal cation contacts are provided by histidine 161, histidine 206, and histidine 259. Substrate contacts are provided by lysine 267, asparagine 276, and arginine 285.

Belongs to the PdxA family. Homodimer. Requires a divalent metal cation as cofactor.

It localises to the cytoplasm. The enzyme catalyses 4-(phosphooxy)-L-threonine + NAD(+) = 3-amino-2-oxopropyl phosphate + CO2 + NADH. It participates in cofactor biosynthesis; pyridoxine 5'-phosphate biosynthesis; pyridoxine 5'-phosphate from D-erythrose 4-phosphate: step 4/5. In terms of biological role, catalyzes the NAD(P)-dependent oxidation of 4-(phosphooxy)-L-threonine (HTP) into 2-amino-3-oxo-4-(phosphooxy)butyric acid which spontaneously decarboxylates to form 3-amino-2-oxopropyl phosphate (AHAP). The polypeptide is 4-hydroxythreonine-4-phosphate dehydrogenase (Sulfurihydrogenibium sp. (strain YO3AOP1)).